A 358-amino-acid chain; its full sequence is Histidinol-phosphate aminotransferase (358 aa).

Residue Lys218 is modified to N6-(pyridoxal phosphate)lysine.

This sequence belongs to the class-II pyridoxal-phosphate-dependent aminotransferase family. Histidinol-phosphate aminotransferase subfamily. As to quaternary structure, homodimer. Pyridoxal 5'-phosphate is required as a cofactor.

It carries out the reaction L-histidinol phosphate + 2-oxoglutarate = 3-(imidazol-4-yl)-2-oxopropyl phosphate + L-glutamate. The protein operates within amino-acid biosynthesis; L-histidine biosynthesis; L-histidine from 5-phospho-alpha-D-ribose 1-diphosphate: step 7/9. The chain is Histidinol-phosphate aminotransferase from Dehalococcoides mccartyi (strain ATCC BAA-2100 / JCM 16839 / KCTC 5957 / BAV1).